The primary structure comprises 206 residues: MGNLLVVIAVALFIAAIVVLVVAIRRPKTPATPGGRRDPLAFDAMPQFGPRQLGPGAIVSHGGIDYVVRGSVTFREGPFVWWEHLLEGGDTPTWLSVQEDDGRLELAMWVKRTDLGLQPGGQHVIDGVTFQETERGHAGYTTEGTTGLPAGGEMDYVDCASAGQGADESMLLSFERWAPDMGWEIATGKSVLAGELTVYPAPPVSA.

A helical transmembrane segment spans residues 4–24 (LLVVIAVALFIAAIVVLVVAI).

It is found in the membrane. This is an uncharacterized protein from Mycobacterium tuberculosis (strain CDC 1551 / Oshkosh).